We begin with the raw amino-acid sequence, 238 residues long: IkB-like protein (238 aa).

4 ANK repeats span residues 48–80 (GSSVFMWICIYGRIDFLKFLFKQESYPGEIINH), 87–118 (GNSALHYLAEKKNHLILEEVLGYFGKNGTRIC), 124–153 (GMTPVMKAAMRGRTLNMLSLIKFGADPTQK), and 158–187 (GFTAWDWAVFTGNMELVKSLNHDYQKPLYM). The Nuclear localization signal motif lies at 80–86 (HHRRDND). Residues 202-213 (KKKPKIIITGCK) carry the Nuclear localization signal motif. The PxIxITxC motif; Interaction with host PPP3CA motif lies at 205–212 (PKIIITGC). The short motif at 227–230 (FLCV) is the FLCV motif element.

The protein belongs to the asfivirus A238L family. As to quaternary structure, interacts with host PPIA. Interacts with host PPP3CA/Calcineurin. Interacts with host RELA/p65; interaction of the 32 kDa form with host RELA results in the formation of a stable complex with NF-kappa-B. Interacts with host PPP3R1. Interacts with host EP300; this interaction inhibits the association of host EP300 with host RELA, JUN and NFATC2. Post-translationally, the protein exists in a 28 kDa and a 32 kDa form, probably due to post-translational modifications which are neither phosphorylation, nor sumoylation.

The protein localises to the host nucleus. The protein resides in the host cytoplasm. In terms of biological role, ikB-like protein that inhibits the binding of NF-kappa-B to DNA, thereby downregulating pro-inflammatory cytokine production. Forms a heterodimer with the NF-kappa-B subunit RELA/p65 and prevents the activation of the NF-kappa-B transcription factor. Inhibits calcineurin function, which is required for the induction of nuclear factor of activated T cells (NFAT)-dependent immune response genes. Prevents the binding of substrates to calcineurin without affecting the phosphatase activity. Does not contain the serine residues that are phosphorylated by host IkB kinase and thus is not degraded following stimulation of the NFkB pathway. This is IkB-like protein (A238L) from Ornithodoros (relapsing fever ticks).